Here is a 511-residue protein sequence, read N- to C-terminus: Probable lipid II flippase MurJ (511 aa).

13 helical membrane passes run 31–51 (IFGA…PNLL), 90–110 (LLTL…PWVI), 130–150 (LLKI…VGAI), 159–179 (IPAF…LFAA), 182–202 (FNPP…LQLV), 237–257 (ILGV…ASFL), 271–291 (LMEF…LPSL), 314–334 (CFLL…PLTV), 354–374 (LIAY…APGF), 383–403 (PVKI…AFIG), 407–427 (HAGL…LLYW), 443–463 (AFLL…LGML), and 481–501 (LMAV…VLGF).

The protein belongs to the MurJ/MviN family.

The protein resides in the cell inner membrane. It participates in cell wall biogenesis; peptidoglycan biosynthesis. In terms of biological role, involved in peptidoglycan biosynthesis. Transports lipid-linked peptidoglycan precursors from the inner to the outer leaflet of the cytoplasmic membrane. This chain is Probable lipid II flippase MurJ, found in Escherichia coli O157:H7.